The chain runs to 184 residues: MFKAKVLVVGPTESGKTILANFISDATETIGGEYNPTQGVRILEFECPNGNKGSSCEVELWDCGGDSKFESCWPVIMKDSHGVIIVFSADIPSHLKEIEMWHLNFIQKQRLQENRCLLIAHKKPGSGDERERLNLSPALAKLTLIYSNLEDDPEDVRMELMKYLRGIVSSLSESRDREEMSIIT.

GTP-binding positions include 10–17 (GPTESGKT), 62–66 (DCGGD), and 122–125 (KKPG).

The protein belongs to the small GTPase superfamily. Rab family.

This is Intraflagellar transport protein 22 homolog (ift22) from Xenopus tropicalis (Western clawed frog).